Here is a 339-residue protein sequence, read N- to C-terminus: Putative P2Y purinoceptor 10 (339 aa).

The Extracellular segment spans residues 1–39; it reads MANLDKYTETFKMGSNSTSTAEIYCNVTNVKFQYSLYAT. 2 N-linked (GlcNAc...) asparagine glycosylation sites follow: asparagine 16 and asparagine 26. Residues 40–60 form a helical membrane-spanning segment; sequence TYILIFIPGLLANSAALWVLC. The Cytoplasmic segment spans residues 61–68; sequence RFISKKNK. Residues 69-89 form a helical membrane-spanning segment; that stretch reads AIIFMINLSVADLAHVLSLPL. The Extracellular portion of the chain corresponds to 90 to 103; the sequence is RIYYYISHHWPFQR. Residues 104-124 form a helical membrane-spanning segment; it reads ALCLLCFYLKYLNMYASICFL. An intrachain disulfide couples cysteine 106 to cysteine 181. The Cytoplasmic portion of the chain corresponds to 125-149; the sequence is TCISLQRCFFLLKPFRARDWKRRYD. A helical membrane pass occupies residues 150–170; the sequence is VGISAAIWIVVGTACLPFPIL. The Extracellular segment spans residues 171–193; it reads RSTDLNNNKSCFADLGYKQMNAV. An N-linked (GlcNAc...) asparagine glycan is attached at asparagine 178. A helical membrane pass occupies residues 194–214; sequence ALVGMITVAELAGFVIPVIII. At 215 to 244 the chain is on the cytoplasmic side; it reads AWCTWKTTISLRQPPMAFQGISERQKALRM. The helical transmembrane segment at 245-265 threads the bilayer; that stretch reads VFMCAAVFFICFTPYHINFIF. Topologically, residues 266–288 are extracellular; that stretch reads YTMVKETIISSCPVVRIALYFHP. Residues 289–309 traverse the membrane as a helical segment; the sequence is FCLCLASLCCLLDPILYYFMA. The Cytoplasmic portion of the chain corresponds to 310–339; the sequence is SEFRDQLSRHGSSVTRSRLMSKESGSSMIG.

Belongs to the G-protein coupled receptor 1 family. As to expression, weakly expressed in blood leukocytes.

It localises to the cell membrane. Putative receptor for purines coupled to G-proteins. This chain is Putative P2Y purinoceptor 10 (P2RY10), found in Homo sapiens (Human).